The sequence spans 100 residues: Acylphosphatase (100 aa).

An Acylphosphatase-like domain is found at 3–92 (RRSYSVIGRV…PLPDTFDIRF (90 aa)). Catalysis depends on residues Arg18 and Asn36. The tract at residues 76–100 (DDPAHEGPLPDTFDIRFRAPGSASE) is disordered.

It belongs to the acylphosphatase family.

It catalyses the reaction an acyl phosphate + H2O = a carboxylate + phosphate + H(+). This Nitratidesulfovibrio vulgaris (strain ATCC 29579 / DSM 644 / CCUG 34227 / NCIMB 8303 / VKM B-1760 / Hildenborough) (Desulfovibrio vulgaris) protein is Acylphosphatase (acyP).